The sequence spans 698 residues: Long-chain-fatty-acid--CoA ligase 1 (698 aa).

Met1 is subject to N-acetylmethionine. The residue at position 9 (Tyr9) is a 3'-nitrotyrosine. At Tyr84 the chain carries Phosphotyrosine. Ser135 is a glycosylation site (O-linked (GlcNAc) serine). Lys356 and Lys386 each carry N6-acetyllysine. Position 620 is a phosphoserine (Ser620). At Lys632 the chain carries N6-acetyllysine.

This sequence belongs to the ATP-dependent AMP-binding enzyme family. Mg(2+) is required as a cofactor.

The protein localises to the microsome membrane. It localises to the mitochondrion outer membrane. Its subcellular location is the peroxisome membrane. The protein resides in the endoplasmic reticulum membrane. The enzyme catalyses a long-chain fatty acid + ATP + CoA = a long-chain fatty acyl-CoA + AMP + diphosphate. It carries out the reaction (5Z,8Z,11Z,14Z)-eicosatetraenoate + ATP + CoA = (5Z,8Z,11Z,14Z)-eicosatetraenoyl-CoA + AMP + diphosphate. It catalyses the reaction 3,7,11,15-tetramethylhexadecanoate + ATP + CoA = phytanoyl-CoA + AMP + diphosphate. The catalysed reaction is hexadecanoate + ATP + CoA = hexadecanoyl-CoA + AMP + diphosphate. The enzyme catalyses (E)-hexadec-2-enoate + ATP + CoA = (2E)-hexadecenoyl-CoA + AMP + diphosphate. It carries out the reaction 2,6,10,14-tetramethylpentadecanoate + ATP + CoA = pristanoyl-CoA + AMP + diphosphate. It catalyses the reaction 14,15-epoxy-(5Z,8Z,11Z)-eicosatrienoate + ATP + CoA = 14,15-epoxy-(5Z,8Z,11Z)-eicosatrienoyl-CoA + AMP + diphosphate. The catalysed reaction is 5-hydroxy-(6E,8Z,11Z,14Z)-eicosatetraenoate + ATP + CoA = 5-hydroxy-(6E,8Z,11Z,14Z)-eicosatetraenoyl-CoA + AMP + diphosphate. The enzyme catalyses 12-hydroxy-(5Z,8Z,10E,14Z)-eicosatetraenoate + ATP + CoA = 12-hydroxy-(5Z,8Z,10E,14Z)-eicosatetraenoyl-CoA + AMP + diphosphate. It carries out the reaction 15-hydroxy-(5Z,8Z,11Z,13E)-eicosatetraenoate + ATP + CoA = 15-hydroxy-(5Z,8Z,11Z,13E)-eicosatetraenoyl-CoA + AMP + diphosphate. It catalyses the reaction (9Z)-octadecenoate + ATP + CoA = (9Z)-octadecenoyl-CoA + AMP + diphosphate. With respect to regulation, inhibited at high temperature and by arachidonate. Catalyzes the conversion of long-chain fatty acids to their active form acyl-CoAs for both synthesis of cellular lipids, and degradation via beta-oxidation. Preferentially uses palmitoleate, oleate and linoleate. Preferentially activates arachidonate than epoxyeicosatrienoic acids (EETs) or hydroxyeicosatrienoic acids (HETEs). The chain is Long-chain-fatty-acid--CoA ligase 1 from Cavia porcellus (Guinea pig).